The sequence spans 155 residues: Small ribosomal subunit protein uS7 (155 aa).

This sequence belongs to the universal ribosomal protein uS7 family. Part of the 30S ribosomal subunit. Contacts proteins S9 and S11.

Its function is as follows. One of the primary rRNA binding proteins, it binds directly to 16S rRNA where it nucleates assembly of the head domain of the 30S subunit. Is located at the subunit interface close to the decoding center, probably blocks exit of the E-site tRNA. The chain is Small ribosomal subunit protein uS7 from Fervidobacterium nodosum (strain ATCC 35602 / DSM 5306 / Rt17-B1).